The chain runs to 1362 residues: DNA-directed RNA polymerase subunit beta'' (1362 aa).

Zn(2+) is bound by residues C224, C295, C302, and C305.

It belongs to the RNA polymerase beta' chain family. RpoC2 subfamily. As to quaternary structure, in plastids the minimal PEP RNA polymerase catalytic core is composed of four subunits: alpha, beta, beta', and beta''. When a (nuclear-encoded) sigma factor is associated with the core the holoenzyme is formed, which can initiate transcription. Requires Zn(2+) as cofactor.

The protein resides in the plastid. It localises to the chloroplast. The enzyme catalyses RNA(n) + a ribonucleoside 5'-triphosphate = RNA(n+1) + diphosphate. In terms of biological role, DNA-dependent RNA polymerase catalyzes the transcription of DNA into RNA using the four ribonucleoside triphosphates as substrates. This is DNA-directed RNA polymerase subunit beta'' from Helianthus annuus (Common sunflower).